A 29-amino-acid chain; its full sequence is Cytochrome b6-f complex subunit 8 (29 aa).

The helical transmembrane segment at 3-23 threads the bilayer; the sequence is ITSIAWGALMVVFTFSLSLVV.

It belongs to the PetN family. As to quaternary structure, the 4 large subunits of the cytochrome b6-f complex are cytochrome b6, subunit IV (17 kDa polypeptide, PetD), cytochrome f and the Rieske protein, while the 4 small subunits are PetG, PetL, PetM and PetN. The complex functions as a dimer.

Its subcellular location is the plastid membrane. In terms of biological role, component of the cytochrome b6-f complex, which mediates electron transfer between photosystem II (PSII) and photosystem I (PSI), cyclic electron flow around PSI, and state transitions. This Aneura mirabilis (Parasitic liverwort) protein is Cytochrome b6-f complex subunit 8.